Consider the following 441-residue polypeptide: GTPase Der (441 aa).

2 consecutive EngA-type G domains span residues 3 to 167 and 176 to 351; these read PLIA…PNKT and TRIA…EQFA. GTP contacts are provided by residues 9-16, 56-60, 119-122, 182-189, 229-233, and 294-297; these read GRPNVGKS, DTGGF, NKID, DTAGI, and NKWD. Residues 352–436 form the KH-like domain; it reads KRISTSDLNR…PMRLLFKGRE (85 aa).

The protein belongs to the TRAFAC class TrmE-Era-EngA-EngB-Septin-like GTPase superfamily. EngA (Der) GTPase family. In terms of assembly, associates with the 50S ribosomal subunit.

In terms of biological role, GTPase that plays an essential role in the late steps of ribosome biogenesis. In Geotalea daltonii (strain DSM 22248 / JCM 15807 / FRC-32) (Geobacter daltonii), this protein is GTPase Der.